The sequence spans 288 residues: Elongation factor Ts (288 aa).

Positions threonine 79 to valine 82 are involved in Mg(2+) ion dislocation from EF-Tu.

It belongs to the EF-Ts family.

The protein resides in the cytoplasm. In terms of biological role, associates with the EF-Tu.GDP complex and induces the exchange of GDP to GTP. It remains bound to the aminoacyl-tRNA.EF-Tu.GTP complex up to the GTP hydrolysis stage on the ribosome. The chain is Elongation factor Ts from Ehrlichia canis (strain Jake).